A 317-amino-acid polypeptide reads, in one-letter code: Heme A synthase (317 aa).

The Cytoplasmic portion of the chain corresponds to 1–6 (MQRSLK). A helical transmembrane segment spans residues 7–27 (WFASATTLAMLFVLIGGALVT). Residues 28-62 (KTGSGMGCGRSWPLCNGQWVPDHITPELIIELSHR) are Extracellular-facing. The cysteines at positions 35 and 42 are disulfide-linked. Residue Glu58 is part of the active site. His61 serves as a coordination point for heme o. The helical transmembrane segment at 63–83 (LVSGLAGIMVLILSIWAWRAI) threads the bilayer. Over 84–90 (GHVQETK) the chain is Cytoplasmic. The helical transmembrane segment at 91 to 111 (FLAVISFVFLVLQGLIGAAAV) threads the bilayer. Topologically, residues 112–121 (VWGQSDFVLA) are extracellular. A helical transmembrane segment spans residues 122 to 142 (LHFGISLISFAAVLLLTLLIF). Residue His123 coordinates heme o. Residues 143-159 (EIDKTFSAASLSLDGKM) lie on the Cytoplasmic side of the membrane. Residues 160–180 (RFHIYGITIYSYIVVYTGALV) traverse the membrane as a helical segment. At 181–211 (RHTNASLACPSWPLCAKTRLLPVQFHEWVQM) the chain is on the extracellular side. A disulfide bridge connects residues Cys189 and Cys195. The helical transmembrane segment at 212–232 (GHRLAAAVIIIWIAAAAIHAV) threads the bilayer. His213 contacts heme b. The Cytoplasmic portion of the chain corresponds to 233-243 (RHYRRQPVIYY). A helical membrane pass occupies residues 244–264 (GWLIALLLVLAQMTTGALVVF). Over 265–270 (TQLNLY) the chain is Extracellular. The chain crosses the membrane as a helical span at residues 271 to 291 (IALAHAFFISCLFGVLSYLLL). Residue His275 coordinates heme b. The Cytoplasmic portion of the chain corresponds to 292 to 317 (LALRTRRAPVKAADHSAGEAAPATLK).

Belongs to the COX15/CtaA family. Type 1 subfamily. In terms of assembly, interacts with CtaB. Requires heme b as cofactor.

The protein resides in the cell membrane. It catalyses the reaction Fe(II)-heme o + 2 A + H2O = Fe(II)-heme a + 2 AH2. It participates in porphyrin-containing compound metabolism; heme A biosynthesis; heme A from heme O: step 1/1. Functionally, catalyzes the conversion of heme O to heme A by two successive hydroxylations of the methyl group at C8. The first hydroxylation forms heme I, the second hydroxylation results in an unstable dihydroxymethyl group, which spontaneously dehydrates, resulting in the formyl group of heme A. In Geobacillus kaustophilus (strain HTA426), this protein is Heme A synthase.